Consider the following 604-residue polypeptide: MTDAPVKRIRNFCIIAHIDHGKSTLADRLLQDTGTVANRDMQEQFLDNMELERERGITIKLQAARMKYKAADGEEYVLNLIDTPGHVDFSYEVSRSLQACEGALLVVDASQGVEAQTLANVYMALENDLEIIPVLNKIDLPGADPDRIKEEIEAIIGLDCSNAIPCSAKTGLGVPEILQSVVDRVPPPADTVKEPTKALIFDSYYDPYRGVIVYFRVMSGSISRKDKVLLMASNKTYELDEVGIMAPDEKKVDELHAGEVGYLAASIKAVADARVGDTITLLNEPADAPLPGYAEAKPMVFCGLFPTEADQYPDLREALHKLQLSDAALKFEPETSSAMGFGFRCGFLGLLHMEIVQERLEREYNLDLIVTAPSVIYNVNLTNGEQILVDNPATLPDPQQRESIEEPYVRMEIYAPNDFNGALMGLCQERRGEYLDMKYITKERVTLIYELPLAEVVTDFFDQMKTRTQGYASMEYHLIGYRKNELVRLDVLINAERADPLTTIVHRDKAYNVGKGLVEKLKELIPRQQFKIPLQASIGSRIIASTSISAIRKDVLAKCYGGDISRKKKLLKKQAKGKKRMKAMGKVDVPQEAFMAVLKLNQTP.

The tr-type G domain occupies 7–189; sequence KRIRNFCIIA…SVVDRVPPPA (183 aa). Residues 19–24 and 136–139 each bind GTP; these read DHGKST and NKID.

Belongs to the TRAFAC class translation factor GTPase superfamily. Classic translation factor GTPase family. LepA subfamily.

It is found in the cell inner membrane. It carries out the reaction GTP + H2O = GDP + phosphate + H(+). In terms of biological role, required for accurate and efficient protein synthesis under certain stress conditions. May act as a fidelity factor of the translation reaction, by catalyzing a one-codon backward translocation of tRNAs on improperly translocated ribosomes. Back-translocation proceeds from a post-translocation (POST) complex to a pre-translocation (PRE) complex, thus giving elongation factor G a second chance to translocate the tRNAs correctly. Binds to ribosomes in a GTP-dependent manner. The chain is Elongation factor 4 from Synechococcus sp. (strain CC9311).